The chain runs to 230 residues: Glutathione S-transferase 2 (230 aa).

Positions 2 to 86 (AHFTLYSHAG…YLADKYDTDR (85 aa)) constitute a GST N-terminal domain. A GST C-terminal domain is found at 93 to 230 (DDPEYYKLIQ…EELAKAKEQH (138 aa)).

This sequence belongs to the GST superfamily.

It carries out the reaction RX + glutathione = an S-substituted glutathione + a halide anion + H(+). Its function is as follows. Involved in the oxidative stress response and detoxification. This Schizosaccharomyces pombe (strain 972 / ATCC 24843) (Fission yeast) protein is Glutathione S-transferase 2 (gst2).